The primary structure comprises 327 residues: NADPH-dependent aldose reductase GRE3 (327 aa).

Tyrosine 49 (proton donor) is an active-site residue. Substrate is bound at residue histidine 111. 219–286 (SSFGPQSFIE…SSKKERLLGN (68 aa)) is a binding site for NADP(+).

The protein belongs to the aldo/keto reductase family. As to quaternary structure, monomer.

It localises to the cytoplasm. Its subcellular location is the nucleus. The catalysed reaction is an alditol + NAD(+) = an aldose + NADH + H(+). It carries out the reaction an alditol + NADP(+) = an aldose + NADPH + H(+). Functionally, aldose reductase with a broad substrate specificity. Reduces the cytotoxic compound methylglyoxal (MG) to acetol and (R)-lactaldehyde under stress conditions. MG is synthesized via a bypath of glycolysis from dihydroxyacetone phosphate and is believed to play a role in cell cycle regulation and stress adaptation. In pentose-fermenting yeasts, aldose reductase catalyzes the reduction of xylose into xylitol. The purified enzyme catalyzes this reaction, but the inability of S.cerevisiae to grow on xylose as sole carbon source indicates that the physiological function is more likely methylglyoxal reduction. The polypeptide is NADPH-dependent aldose reductase GRE3 (Saccharomyces cerevisiae (strain ATCC 204508 / S288c) (Baker's yeast)).